A 597-amino-acid chain; its full sequence is MDHIRNFSIIAHIDHGKSTLADRIIQVCGGLADREMEAQVLDSMDIERERGITIKAQTAALSYRARDGKVYNLNLIDTPGHVDFSYEVSRSLSACEGALLVVDASQGVEAQTVANCYTAIELGVEVVPVLNKIDLPAANPENAIEEIEDVIGIDATDATRCSAKTGLGVEDVLESLIAKVPPPKGDPAAPLQALIIDSWFDNYVGVVMLVRIVNGTLRPKDKIKMMATGAQYPVEHVGVFTPKSRNLDSLSAGQVGFIIAGIKELTAAKVGDTVTHAAKAAAEPLPGFKEVKPQVFAGLYPVEANQYDALRESLEKLKLNDASLQYEPEVSQALGFGFRCGFLGLLHMEIVQERLEREFDMDLITTAPTVVYEVVQSDGSTIMVENPAKMPEPGRIAEVREPIVTVNLYMPQDYVGSVITLCEQKRGSQINMQYHGRQVQLTYEIPMAEIVLDFFDRLKSVSRGYASMDYEFKEYRSSDVVKVDMLINGDKVDALSIIVHRSQSQYRGREVAAKMREIIPRQMYDVAIQAAIGAHIVARENIKALRKNVLAKCYGGDITRKKKLLEKQKEGKKRMKQVGSVEIPQEAFLAILRVEDK.

Positions 2–184 constitute a tr-type G domain; sequence DHIRNFSIIA…SLIAKVPPPK (183 aa). Residues 14–19 and 131–134 contribute to the GTP site; these read DHGKST and NKID.

It belongs to the TRAFAC class translation factor GTPase superfamily. Classic translation factor GTPase family. LepA subfamily.

The protein resides in the cell inner membrane. The catalysed reaction is GTP + H2O = GDP + phosphate + H(+). Required for accurate and efficient protein synthesis under certain stress conditions. May act as a fidelity factor of the translation reaction, by catalyzing a one-codon backward translocation of tRNAs on improperly translocated ribosomes. Back-translocation proceeds from a post-translocation (POST) complex to a pre-translocation (PRE) complex, thus giving elongation factor G a second chance to translocate the tRNAs correctly. Binds to ribosomes in a GTP-dependent manner. This chain is Elongation factor 4, found in Burkholderia cenocepacia (strain HI2424).